The sequence spans 59 residues: Insertion element IS986 uncharacterized 6.6 kDa protein (59 aa).

The segment at 1–26 (MRKWVRQAQVDAGARPGTTTEESAEI) is disordered.

This sequence belongs to the transposase 8 family.

This chain is Insertion element IS986 uncharacterized 6.6 kDa protein, found in Mycobacterium tuberculosis.